Consider the following 200-residue polypeptide: Glycosyl hydrolase family 19 domain-containing protein HI_1415 (200 aa).

It belongs to the glycosyl hydrolase 19 family.

The chain is Glycosyl hydrolase family 19 domain-containing protein HI_1415 from Haemophilus influenzae (strain ATCC 51907 / DSM 11121 / KW20 / Rd).